Reading from the N-terminus, the 295-residue chain is NAD kinase (295 aa).

Asp72 functions as the Proton acceptor in the catalytic mechanism. NAD(+) contacts are provided by residues 72 to 73 (DG), 146 to 147 (ND), Arg157, Lys174, Asp176, 187 to 192 (TAYALS), and Gln247.

Belongs to the NAD kinase family. It depends on a divalent metal cation as a cofactor.

It is found in the cytoplasm. The enzyme catalyses NAD(+) + ATP = ADP + NADP(+) + H(+). In terms of biological role, involved in the regulation of the intracellular balance of NAD and NADP, and is a key enzyme in the biosynthesis of NADP. Catalyzes specifically the phosphorylation on 2'-hydroxyl of the adenosine moiety of NAD to yield NADP. In Azotobacter vinelandii (strain DJ / ATCC BAA-1303), this protein is NAD kinase.